A 229-amino-acid chain; its full sequence is Adenylate kinase 1 (229 aa).

Position 42–47 (42–47) interacts with ATP; the sequence is GCGKGT. At S62 the chain carries Phosphoserine. AMP contacts are provided by residues S63, R68, 118–121, and Q125; that span reads GYPR. R156 is a binding site for ATP. The AMP site is built by R164 and R175.

Belongs to the adenylate kinase family. AK1 subfamily. In terms of tissue distribution, high expression levels in the thorax, suggesting a possible function in the gastrointestinal or reproductive systems.

It is found in the cytoplasm. The enzyme catalyses AMP + ATP = 2 ADP. Catalyzes the reversible transfer of the terminal phosphate group between ATP and AMP. Plays an important role in cellular energy homeostasis and in adenine nucleotide metabolism. The sequence is that of Adenylate kinase 1 from Drosophila melanogaster (Fruit fly).